A 329-amino-acid polypeptide reads, in one-letter code: Protein-arginine N-acetylglucosaminyltransferase NleB1 (329 aa).

N-beta-linked (GlcNAc) arginine; by autocatalysis glycosylation occurs at Arg-13. Residue 48–50 (QWF) coordinates UDP-N-acetyl-alpha-D-glucosamine. N-beta-linked (GlcNAc) arginine; by autocatalysis glycosylation occurs at Arg-53. Position 72 (Tyr-72) interacts with UDP-N-acetyl-alpha-D-glucosamine. Residue Arg-159 is glycosylated (N-beta-linked (GlcNAc) arginine; by autocatalysis). 219–222 (YLDA) is a binding site for UDP-N-acetyl-alpha-D-glucosamine. Positions 221 to 223 (DAD) match the DXD motif motif. Residue Asp-223 coordinates Mn(2+). The Proton acceptor role is filled by Glu-253. A glycan (N-beta-linked (GlcNAc) arginine; by autocatalysis) is linked at Arg-293. Mn(2+) contacts are provided by Asn-320 and Ser-322. UDP-N-acetyl-alpha-D-glucosamine-binding positions include Ser-322 and 327–329 (SSW).

The protein belongs to the glycosyltransferase NleB family. It depends on Mn(2+) as a cofactor. Auto-glycosylated: arginine GlcNAcylation is required for activity toward death domain-containing host target proteins.

Its subcellular location is the secreted. It localises to the host cytoplasm. It catalyses the reaction L-arginyl-[protein] + UDP-N-acetyl-alpha-D-glucosamine = N(omega)-(N-acetyl-beta-D-glucosaminyl)-L-arginyl-[protein] + UDP + H(+). Its activity is regulated as follows. Protein-arginine N-acetylglucosaminyltransferase activity is inhibited by 100066N compound (flavone analog) and 102644N compound (a substituted isoxazole). In terms of biological role, protein-arginine N-acetylglucosaminyltransferase effector that disrupts TNF signaling in infected cells, including NF-kappa-B signaling, apoptosis and necroptosis. Acts by catalyzing the transfer of a single N-acetylglucosamine (GlcNAc) to a conserved arginine residue in the death domain of host proteins such as FADD: arginine GlcNAcylation prevents homotypic/heterotypic death domain interactions and assembly of the oligomeric TNF-alpha receptor complex, thereby disrupting TNF signaling. Also acts on host proteins without a death domain: catalyzes arginine GlcNAcylation of host GAPDH protein, thereby preventing GAPDH interaction with TRAF2, leading to inhibit NF-kappa-B signaling. Catalyzes auto-GlcNAcylation, which is required for activity toward death domain-containing host target proteins. This is Protein-arginine N-acetylglucosaminyltransferase NleB1 from Escherichia coli O157:H7.